A 255-amino-acid chain; its full sequence is Triosephosphate isomerase (255 aa).

9–11 is a binding site for substrate; that stretch reads NWK. His95 (electrophile) is an active-site residue. Glu167 functions as the Proton acceptor in the catalytic mechanism. Substrate-binding positions include Gly173, Ser212, and 233–234; that span reads GG.

The protein belongs to the triosephosphate isomerase family. Homodimer.

It is found in the cytoplasm. It carries out the reaction D-glyceraldehyde 3-phosphate = dihydroxyacetone phosphate. It participates in carbohydrate biosynthesis; gluconeogenesis. It functions in the pathway carbohydrate degradation; glycolysis; D-glyceraldehyde 3-phosphate from glycerone phosphate: step 1/1. Its function is as follows. Involved in the gluconeogenesis. Catalyzes stereospecifically the conversion of dihydroxyacetone phosphate (DHAP) to D-glyceraldehyde-3-phosphate (G3P). This chain is Triosephosphate isomerase, found in Serratia proteamaculans (strain 568).